Consider the following 320-residue polypeptide: Cytochrome f (320 aa).

The N-terminal stretch at 1 to 35 (MQTRNAFSWLKKQITRSISVSLMIYILTRTSISSA) is a signal peptide. Positions 36, 56, 59, and 60 each coordinate heme. The helical transmembrane segment at 286 to 306 (VQGLLFFLASVILAQIFLVLK) threads the bilayer.

Belongs to the cytochrome f family. As to quaternary structure, the 4 large subunits of the cytochrome b6-f complex are cytochrome b6, subunit IV (17 kDa polypeptide, petD), cytochrome f and the Rieske protein, while the 4 small subunits are PetG, PetL, PetM and PetN. The complex functions as a dimer. Heme serves as cofactor.

It localises to the plastid. Its subcellular location is the chloroplast thylakoid membrane. Functionally, component of the cytochrome b6-f complex, which mediates electron transfer between photosystem II (PSII) and photosystem I (PSI), cyclic electron flow around PSI, and state transitions. This chain is Cytochrome f, found in Solanum bulbocastanum (Wild potato).